Consider the following 345-residue polypeptide: MSKNIKLTSLTKNSGCAAKIGPGVLHSVLSSLPKFEDENLIVGFDTSDDACVYKINDDTVVIKTVDFFPPMVDDPYTFGQVAAANALSDVYAMGGNPSIAMNLICFPSCLDISIMREILAGGYDKVKEAGAVIAGGHTIADPTPKYGLCVSGFARPEEILSNSNAKIGDVIILTKPLGIGIMNTAAKAELIGENKIKEVTSIMSTLNKYAKECTSGLEIHSCTDVTGFGLIGHGYEMASGSKKTIEIFSEYVPIIDGALDYAKMGIIPEGMYNNLDYLKDKFVVEANISQELQDVLIDPQTSGGLLLSLPEKHAKEFLSRIEKFTPYAKIIGQVLDKGDKPIVIK.

Residue Cys-16 is part of the active site. ATP contacts are provided by residues Lys-19 and 46-48 (TSD). Asp-49 serves as a coordination point for Mg(2+). ATP-binding positions include Asp-66, Asp-89, and 136-138 (GHT). Asp-89 contacts Mg(2+). Residue Asp-224 participates in Mg(2+) binding.

This sequence belongs to the selenophosphate synthase 1 family. Class I subfamily. Homodimer. Requires Mg(2+) as cofactor.

It catalyses the reaction hydrogenselenide + ATP + H2O = selenophosphate + AMP + phosphate + 2 H(+). Synthesizes selenophosphate from selenide and ATP. The polypeptide is Selenide, water dikinase (Clostridium botulinum (strain Alaska E43 / Type E3)).